Here is a 455-residue protein sequence, read N- to C-terminus: L-serine dehydratase 2 (455 aa).

This sequence belongs to the iron-sulfur dependent L-serine dehydratase family. [4Fe-4S] cluster serves as cofactor. Activated by post-translational modification by a system involving at least three gene products. Activation is mimicked in vitro by iron and dithiothreitol. There is considerable evidence for a free-radical activation mechanism.

The enzyme catalyses L-serine = pyruvate + NH4(+). It functions in the pathway carbohydrate biosynthesis; gluconeogenesis. Its function is as follows. Also deaminates threonine, particularly when it is present in high concentration. The protein is L-serine dehydratase 2 (sdaB) of Escherichia coli (strain K12).